The following is a 274-amino-acid chain: Formamidopyrimidine-DNA glycosylase (274 aa).

P2 acts as the Schiff-base intermediate with DNA in catalysis. The active-site Proton donor is E3. The active-site Proton donor; for beta-elimination activity is K57. DNA is bound by residues H92, R111, and K152. The FPG-type zinc finger occupies 237–271 (QVYGRKGEECNDCGSIIEAKVIGQRNSFYCPKCQR). R261 (proton donor; for delta-elimination activity) is an active-site residue.

This sequence belongs to the FPG family. As to quaternary structure, monomer. Requires Zn(2+) as cofactor.

It catalyses the reaction Hydrolysis of DNA containing ring-opened 7-methylguanine residues, releasing 2,6-diamino-4-hydroxy-5-(N-methyl)formamidopyrimidine.. The catalysed reaction is 2'-deoxyribonucleotide-(2'-deoxyribose 5'-phosphate)-2'-deoxyribonucleotide-DNA = a 3'-end 2'-deoxyribonucleotide-(2,3-dehydro-2,3-deoxyribose 5'-phosphate)-DNA + a 5'-end 5'-phospho-2'-deoxyribonucleoside-DNA + H(+). Involved in base excision repair of DNA damaged by oxidation or by mutagenic agents. Acts as a DNA glycosylase that recognizes and removes damaged bases. Has a preference for oxidized purines, such as 7,8-dihydro-8-oxoguanine (8-oxoG). Has AP (apurinic/apyrimidinic) lyase activity and introduces nicks in the DNA strand. Cleaves the DNA backbone by beta-delta elimination to generate a single-strand break at the site of the removed base with both 3'- and 5'-phosphates. This chain is Formamidopyrimidine-DNA glycosylase, found in Glaesserella parasuis serovar 5 (strain SH0165) (Haemophilus parasuis).